Consider the following 709-residue polypeptide: Polyribonucleotide nucleotidyltransferase (709 aa).

Positions 485 and 491 each coordinate Mg(2+). A KH domain is found at 552–611 (PRIHTMKIDPKKIKDVIGKGGATIRALTEETGTSIDIDDDGTVKIAATDNNAAKRVMERI). The 69-residue stretch at 621–689 (NAIYKGKVTR…RQGRIRLTMK (69 aa)) folds into the S1 motif domain.

Belongs to the polyribonucleotide nucleotidyltransferase family. As to quaternary structure, component of the RNA degradosome, which is a multiprotein complex involved in RNA processing and mRNA degradation. Requires Mg(2+) as cofactor.

The protein localises to the cytoplasm. It catalyses the reaction RNA(n+1) + phosphate = RNA(n) + a ribonucleoside 5'-diphosphate. Involved in mRNA degradation. Catalyzes the phosphorolysis of single-stranded polyribonucleotides processively in the 3'- to 5'-direction. In Glaesserella parasuis serovar 5 (strain SH0165) (Haemophilus parasuis), this protein is Polyribonucleotide nucleotidyltransferase.